The chain runs to 470 residues: Fumarate hydratase class II (470 aa).

Substrate-binding positions include serine 99 to threonine 101, histidine 129 to aspartate 132, serine 139 to asparagine 141, and threonine 187. The active-site Proton donor/acceptor is the histidine 188. Serine 318 is a catalytic residue. Substrate contacts are provided by residues serine 319 and lysine 324–asparagine 326.

The protein belongs to the class-II fumarase/aspartase family. Fumarase subfamily. Homotetramer.

The protein resides in the cytoplasm. The enzyme catalyses (S)-malate = fumarate + H2O. The protein operates within carbohydrate metabolism; tricarboxylic acid cycle; (S)-malate from fumarate: step 1/1. Functionally, involved in the TCA cycle. Catalyzes the stereospecific interconversion of fumarate to L-malate. In Halobacterium salinarum (strain ATCC 700922 / JCM 11081 / NRC-1) (Halobacterium halobium), this protein is Fumarate hydratase class II.